The following is a 258-amino-acid chain: Homeobox protein VENTX (258 aa).

Over residues 1–32 (MRLSSSPPRGPQQLSSFGSVDWLSQSSCSGPT) the composition is skewed to polar residues. 2 disordered regions span residues 1-93 (MRLS…RAPR) and 227-248 (SHPP…PRGL). The homeobox DNA-binding region spans 91-150 (APRVRTAFTMEQVRTLEGVFQHHQYLSPLERKRLAREMQLSEVQIKTWFQNRRMKHKRQM).

As to expression, expressed in bone marrow of patients recovering from chemotherapy. Also expressed in an erythroleukemia cell line.

It localises to the nucleus. In terms of biological role, may be involved in ventralization. In Homo sapiens (Human), this protein is Homeobox protein VENTX (VENTX).